The chain runs to 212 residues: DNA-directed RNA polymerase III subunit RPC8 (212 aa).

S162 carries the post-translational modification Phosphoserine. Residues 166-184 (RELEERAQLENEIEGKNEE) show a composition bias toward basic and acidic residues. A disordered region spans residues 166–194 (RELEERAQLENEIEGKNEETPQNEKPPAY).

Belongs to the eukaryotic RPB7/RPC8 RNA polymerase subunit family. In terms of assembly, component of the RNA polymerase III (Pol III) complex consisting of 17 subunits. RPC25/RPC8 and RPC17/RPC9 form a Pol III subcomplex.

Its subcellular location is the nucleus. DNA-dependent RNA polymerase catalyzes the transcription of DNA into RNA using the four ribonucleoside triphosphates as substrates. Specific peripheric component of RNA polymerase III which synthesizes small RNAs, such as 5S rRNA and tRNA. The RPC25/RPC8-RPC17/RPC9 subcomplex may bind Pol III transcripts emerging from the adjacent exit pore during elongation. This chain is DNA-directed RNA polymerase III subunit RPC8 (RPC25), found in Saccharomyces cerevisiae (strain ATCC 204508 / S288c) (Baker's yeast).